Reading from the N-terminus, the 284-residue chain is Pantothenate synthetase (284 aa).

34 to 41 (MGALHAGH) is a binding site for ATP. His-41 acts as the Proton donor in catalysis. Gln-65 is a (R)-pantoate binding site. Gln-65 contacts beta-alanine. 151–154 (GEKD) is a binding site for ATP. Gln-157 is a binding site for (R)-pantoate. ATP-binding positions include Leu-180 and 188–191 (MSSR).

This sequence belongs to the pantothenate synthetase family. In terms of assembly, homodimer.

The protein resides in the cytoplasm. The catalysed reaction is (R)-pantoate + beta-alanine + ATP = (R)-pantothenate + AMP + diphosphate + H(+). Its pathway is cofactor biosynthesis; (R)-pantothenate biosynthesis; (R)-pantothenate from (R)-pantoate and beta-alanine: step 1/1. Its function is as follows. Catalyzes the condensation of pantoate with beta-alanine in an ATP-dependent reaction via a pantoyl-adenylate intermediate. The protein is Pantothenate synthetase of Paramagnetospirillum magneticum (strain ATCC 700264 / AMB-1) (Magnetospirillum magneticum).